The sequence spans 865 residues: Leucine-rich repeat-containing protein 66 (865 aa).

A helical transmembrane segment spans residues 4 to 24 (FYARVTVMVTGLCFVGTVTNP). Asn-42 carries an N-linked (GlcNAc...) asparagine glycan. LRR repeat units follow at residues 138–160 (RLKVLLLQRNQLGPTPKGLWKLK), 161–182 (PLCSLDLSFNRRVGIGLSGFHG), 185–206 (QLKSIYLKNNKILTIHPEAFKG), 209–230 (KLQVVDLRSSALTMLVPIVTIA), and 235–255 (NLELGLADNQWQCNESDANFQ). A glycan (N-linked (GlcNAc...) asparagine) is linked at Asn-248. Residues 366–386 (ALAVCLSVFITFVVAFCLGAF) form a helical membrane-spanning segment. Disordered regions lie at residues 463-522 (RMLG…PGQH) and 654-749 (DTPS…AESV). Over residues 470-479 (MDPSSQQSPG) the composition is skewed to polar residues. Positions 675–688 (AVQRDASFDPHDDL) are enriched in basic and acidic residues. Over residues 702–713 (FTLSSEGSQDTR) the composition is skewed to polar residues. Residues Ser-714 and Ser-748 each carry the phosphoserine modification. One can recognise an LRRNT domain in the interval 728-759 (SQPLPSRNLGEYKDSVTSAESVEDITSQQTLE). Asn-787 carries N-linked (GlcNAc...) asparagine glycosylation. The interval 840–865 (FPNIDSSPSPPCSDQDPSDPEEHDTK) is disordered. A compositionally biased stretch (acidic residues) spans 855 to 865 (DPSDPEEHDTK).

It is found in the membrane. The protein is Leucine-rich repeat-containing protein 66 (Lrrc66) of Rattus norvegicus (Rat).